The sequence spans 181 residues: Large ribosomal subunit protein uL6 (181 aa).

The protein belongs to the universal ribosomal protein uL6 family. In terms of assembly, part of the 50S ribosomal subunit.

In terms of biological role, this protein binds to the 23S rRNA, and is important in its secondary structure. It is located near the subunit interface in the base of the L7/L12 stalk, and near the tRNA binding site of the peptidyltransferase center. This chain is Large ribosomal subunit protein uL6, found in Synechococcus sp. (strain JA-3-3Ab) (Cyanobacteria bacterium Yellowstone A-Prime).